A 168-amino-acid polypeptide reads, in one-letter code: Photosystem I assembly protein Ycf3 (168 aa).

3 TPR repeats span residues 35 to 68 (AFTYYRDGMSAQSEGNYAEALQNYYEAMRLEIDP), 72 to 105 (SYILYNIGLIHTSNGEHTKALEYYFRALERNPFL), and 120 to 153 (GEQAIRQGDSEIAEAWFDQAAEYWKQAIALTPGN).

Belongs to the Ycf3 family.

Its subcellular location is the plastid. It is found in the chloroplast thylakoid membrane. Essential for the assembly of the photosystem I (PSI) complex. May act as a chaperone-like factor to guide the assembly of the PSI subunits. This chain is Photosystem I assembly protein Ycf3, found in Oenothera elata subsp. hookeri (Hooker's evening primrose).